A 507-amino-acid polypeptide reads, in one-letter code: ATP synthase subunit alpha (507 aa).

An ATP-binding site is contributed by 168–175 (GDRQTGKT).

It belongs to the ATPase alpha/beta chains family. F-type ATPases have 2 components, CF(1) - the catalytic core - and CF(0) - the membrane proton channel. CF(1) has five subunits: alpha(3), beta(3), gamma(1), delta(1), epsilon(1). CF(0) has three main subunits: a(1), b(2) and c(9-12). The alpha and beta chains form an alternating ring which encloses part of the gamma chain. CF(1) is attached to CF(0) by a central stalk formed by the gamma and epsilon chains, while a peripheral stalk is formed by the delta and b chains.

The protein localises to the cell membrane. The catalysed reaction is ATP + H2O + 4 H(+)(in) = ADP + phosphate + 5 H(+)(out). Produces ATP from ADP in the presence of a proton gradient across the membrane. The alpha chain is a regulatory subunit. The polypeptide is ATP synthase subunit alpha (Mesomycoplasma hyopneumoniae (strain 7448) (Mycoplasma hyopneumoniae)).